Reading from the N-terminus, the 295-residue chain is Enolase-phosphatase E1 (295 aa).

Mg(2+) contacts are provided by aspartate 20 and glutamate 22. Substrate contacts are provided by residues 153–154 and lysine 187; that span reads SS. A Mg(2+)-binding site is contributed by aspartate 212. The tract at residues 260 to 295 is disordered; it reads ETKEENGGATNGKRKIEETNDDVAEEDKAQVYPNKK.

This sequence belongs to the HAD-like hydrolase superfamily. MasA/MtnC family. As to quaternary structure, monomer. The cofactor is Mg(2+).

It localises to the cytoplasm. The protein resides in the nucleus. It carries out the reaction 5-methylsulfanyl-2,3-dioxopentyl phosphate + H2O = 1,2-dihydroxy-5-(methylsulfanyl)pent-1-en-3-one + phosphate. Its pathway is amino-acid biosynthesis; L-methionine biosynthesis via salvage pathway; L-methionine from S-methyl-5-thio-alpha-D-ribose 1-phosphate: step 3/6. It functions in the pathway amino-acid biosynthesis; L-methionine biosynthesis via salvage pathway; L-methionine from S-methyl-5-thio-alpha-D-ribose 1-phosphate: step 4/6. Its function is as follows. Bifunctional enzyme that catalyzes the enolization of 2,3-diketo-5-methylthiopentyl-1-phosphate (DK-MTP-1-P) into the intermediate 2-hydroxy-3-keto-5-methylthiopentenyl-1-phosphate (HK-MTPenyl-1-P), which is then dephosphorylated to form the acireductone 1,2-dihydroxy-3-keto-5-methylthiopentene (DHK-MTPene). In Anopheles gambiae (African malaria mosquito), this protein is Enolase-phosphatase E1.